The sequence spans 686 residues: U-box domain-containing protein 19 (686 aa).

Residues 277–351 enclose the U-box domain; that stretch reads LNVDDLRCPI…QSYSKQNGVV (75 aa). ARM repeat units follow at residues 406 to 445, 448 to 489, 491 to 533, 536 to 577, and 579 to 620; these read TFYR…NLSK, AGKT…YLSS, GDYS…SLLM, PDNH…KMAE, and PDGM…NLCH.

It catalyses the reaction S-ubiquitinyl-[E2 ubiquitin-conjugating enzyme]-L-cysteine + [acceptor protein]-L-lysine = [E2 ubiquitin-conjugating enzyme]-L-cysteine + N(6)-ubiquitinyl-[acceptor protein]-L-lysine.. It participates in protein modification; protein ubiquitination. Functions as an E3 ubiquitin ligase. The chain is U-box domain-containing protein 19 (PUB19) from Arabidopsis thaliana (Mouse-ear cress).